The following is a 366-amino-acid chain: Beta sliding clamp (366 aa).

Belongs to the beta sliding clamp family. As to quaternary structure, forms a ring-shaped head-to-tail homodimer around DNA which binds and tethers DNA polymerases and other proteins to the DNA. The DNA replisome complex has a single clamp-loading complex (3 tau and 1 each of delta, delta', psi and chi subunits) which binds 3 Pol III cores (1 core on the leading strand and 2 on the lagging strand) each with a beta sliding clamp dimer. Additional proteins in the replisome are other copies of gamma, psi and chi, Ssb, DNA helicase and RNA primase.

The protein localises to the cytoplasm. Its function is as follows. Confers DNA tethering and processivity to DNA polymerases and other proteins. Acts as a clamp, forming a ring around DNA (a reaction catalyzed by the clamp-loading complex) which diffuses in an ATP-independent manner freely and bidirectionally along dsDNA. Initially characterized for its ability to contact the catalytic subunit of DNA polymerase III (Pol III), a complex, multichain enzyme responsible for most of the replicative synthesis in bacteria; Pol III exhibits 3'-5' exonuclease proofreading activity. The beta chain is required for initiation of replication as well as for processivity of DNA replication. The chain is Beta sliding clamp (dnaN) from Buchnera aphidicola subsp. Rhopalosiphum padi.